Here is a 96-residue protein sequence, read N- to C-terminus: Putative pterin-4-alpha-carbinolamine dehydratase (96 aa).

Belongs to the pterin-4-alpha-carbinolamine dehydratase family.

It catalyses the reaction (4aS,6R)-4a-hydroxy-L-erythro-5,6,7,8-tetrahydrobiopterin = (6R)-L-erythro-6,7-dihydrobiopterin + H2O. This Paraburkholderia xenovorans (strain LB400) protein is Putative pterin-4-alpha-carbinolamine dehydratase.